The primary structure comprises 231 residues: Sugar fermentation stimulation protein homolog (231 aa).

It belongs to the SfsA family.

The protein is Sugar fermentation stimulation protein homolog of Citrifermentans bemidjiense (strain ATCC BAA-1014 / DSM 16622 / JCM 12645 / Bem) (Geobacter bemidjiensis).